The sequence spans 268 residues: Bis(5'-nucleosyl)-tetraphosphatase, symmetrical (268 aa).

Belongs to the Ap4A hydrolase family.

The catalysed reaction is P(1),P(4)-bis(5'-adenosyl) tetraphosphate + H2O = 2 ADP + 2 H(+). Hydrolyzes diadenosine 5',5'''-P1,P4-tetraphosphate to yield ADP. This Vibrio parahaemolyticus serotype O3:K6 (strain RIMD 2210633) protein is Bis(5'-nucleosyl)-tetraphosphatase, symmetrical.